The sequence spans 290 residues: Ribosomal RNA small subunit methyltransferase A (290 aa).

Asparagine 27, leucine 29, glycine 54, glutamate 75, aspartate 100, and asparagine 125 together coordinate S-adenosyl-L-methionine.

Belongs to the class I-like SAM-binding methyltransferase superfamily. rRNA adenine N(6)-methyltransferase family. RsmA subfamily.

Its subcellular location is the cytoplasm. It catalyses the reaction adenosine(1518)/adenosine(1519) in 16S rRNA + 4 S-adenosyl-L-methionine = N(6)-dimethyladenosine(1518)/N(6)-dimethyladenosine(1519) in 16S rRNA + 4 S-adenosyl-L-homocysteine + 4 H(+). In terms of biological role, specifically dimethylates two adjacent adenosines (A1518 and A1519) in the loop of a conserved hairpin near the 3'-end of 16S rRNA in the 30S particle. May play a critical role in biogenesis of 30S subunits. This Streptococcus pyogenes serotype M18 (strain MGAS8232) protein is Ribosomal RNA small subunit methyltransferase A.